We begin with the raw amino-acid sequence, 147 residues long: UPF0178 protein VS_2364 (147 aa).

This sequence belongs to the UPF0178 family.

This chain is UPF0178 protein VS_2364, found in Vibrio atlanticus (strain LGP32) (Vibrio splendidus (strain Mel32)).